Reading from the N-terminus, the 180-residue chain is Lysine-specific demethylase 5C (180 aa).

Positions 116–159 are disordered; that stretch reads PEESLAYSSDAGEGAGHIPKVQGLLENGDSVTSPEKVATEEGSG. Position 148 is a phosphoserine (S148).

Belongs to the JARID1 histone demethylase family. In terms of assembly, part of two distinct complexes, one containing E2F6, and the other containing REST. Interacts with ZMYND8. It depends on Fe(2+) as a cofactor.

Its subcellular location is the nucleus. It catalyses the reaction N(6),N(6),N(6)-trimethyl-L-lysyl(4)-[histone H3] + 3 2-oxoglutarate + 3 O2 = L-lysyl(4)-[histone H3] + 3 formaldehyde + 3 succinate + 3 CO2. Histone demethylase that specifically demethylates 'Lys-4' of histone H3, thereby playing a central role in histone code. Does not demethylate histone H3 'Lys-9', H3 'Lys-27', H3 'Lys-36', H3 'Lys-79' or H4 'Lys-20'. Demethylates trimethylated and dimethylated but not monomethylated H3 'Lys-4'. Participates in transcriptional repression of neuronal genes by recruiting histone deacetylases and REST at neuron-restrictive silencer elements. Represses the CLOCK-BMAL1 heterodimer-mediated transcriptional activation of the core clock component PER2. This is Lysine-specific demethylase 5C (KDM5C) from Cricetulus griseus (Chinese hamster).